Here is a 536-residue protein sequence, read N- to C-terminus: MAERDHYHTIDDPNVPCNFYDTVNLTGHRLFPNGSYDYYGTIVPAELVGTYDYIHSSLTERIEVREHVRGCVCKFKSCLNICCPWRQVFNSEVDGCIIDHTDNRTWPDPPMLNITFRNESTILVNMFTQFAIQSFRPCPKMFSLQPETSSWDDYLLFENGSMLRVDDKLLIRKNEFCMVPTYVNESDMFYTIHPANCDMQDDHSTVKIINSYAMMFSIPFMMLTIAVYLLIPELRNQHGKSLVCYLIGLTVGYSSLCYVQLYQVDATGVTCKVFGYTAYFFFMGAYMWLSVISFDLWHNFRGTRGINRFQEKKRFLFYSLYSWGIALVFLAFTYCAQQLSNLPDNLKPGIGDGVYCWLDMSNWAAMIYFYGPILAIVVANTIMFIMTAIKIHGVQREMARIIASENSTKNLRTEKDKFGLFLRLFLIMGITWLTELISYFVGSDKGWSKLFYISDLANAMQGFLIFMLFVMKKKVKHLITNRCSSVRDGSNQRQSQYSTKTTSSSVANLSLHEKPSVEKPLVISSSVDPQKTTIFR.

Disulfide bonds link Cys17–Cys71, Cys73–Cys78, Cys82–Cys177, Cys83–Cys96, and Cys138–Cys197. N-linked (GlcNAc...) asparagine glycosylation is found at Asn24 and Asn33. Asn103, Asn113, Asn118, Asn159, and Asn184 each carry an N-linked (GlcNAc...) asparagine glycan. A helical membrane pass occupies residues Tyr212–Pro232. Topologically, residues Glu233–Ser241 are cytoplasmic. Residues Leu242 to Tyr262 traverse the membrane as a helical segment. Residues Gln263–Val273 are Extracellular-facing. Residues Phe274–Phe294 form a helical membrane-spanning segment. Residues Asp295–Arg314 lie on the Cytoplasmic side of the membrane. A helical transmembrane segment spans residues Phe315–Cys335. At Ala336–Ala365 the chain is on the extracellular side. Residues Met366–Met386 traverse the membrane as a helical segment. The Cytoplasmic segment spans residues Thr387–Lys417. A helical membrane pass occupies residues Phe418 to Ser438. Residues Tyr439–Lys449 are Extracellular-facing. Residues Leu450–Val470 traverse the membrane as a helical segment. Residues Met471–Arg536 are Cytoplasmic-facing. Residues Arg487 to Val506 are disordered. Positions Gln492 to Ser505 are enriched in low complexity.

This sequence belongs to the G-protein coupled receptor 2 family. Mth subfamily. As to quaternary structure, homodimer.

Its subcellular location is the cell membrane. Its function is as follows. Involved in biological aging and stress response. Essential for adult survival. The chain is G-protein coupled receptor Mth2 (mth2) from Drosophila simulans (Fruit fly).